A 229-amino-acid polypeptide reads, in one-letter code: High molecular weight rubredoxin (229 aa).

The flavodoxin-reductase-like stretch occupies residues 1–158 (MDTKALHTLT…YYHQVKRGTT (158 aa)). Residues 178–229 (SPKYQCTICNYVYDPVQGDPEHGIAPGTPFADLPEDWTCPICGAGKDAFEQI) enclose the Rubredoxin-like domain. Cysteine 183, cysteine 186, cysteine 216, and cysteine 219 together coordinate Fe cation.

It in the N-terminal section; belongs to the flavodoxin reductase family. As to quaternary structure, homodimer. The cofactor is Fe cation. FMN is required as a cofactor.

Functionally, has nitric oxide reductase activity in combination with FprA; probably involved in nitrosative stress protection. Acts as an NADH:FprA oxidoreductase. The polypeptide is High molecular weight rubredoxin (hrb) (Moorella thermoacetica (strain ATCC 39073 / JCM 9320)).